Consider the following 489-residue polypeptide: Rhamnulokinase (489 aa).

13–17 (ASSGR) contributes to the ATP binding site. Residues cysteine 68 and cysteine 222 are joined by a disulfide bond. Substrate contacts are provided by residues glycine 83 and 236-238 (HDT). Catalysis depends on aspartate 237, which acts as the Proton acceptor. Threonine 259 is a binding site for ATP. Residue asparagine 296 coordinates substrate. Glutamine 304 serves as a coordination point for ATP. Cysteine 353 and cysteine 370 are oxidised to a cystine. Glycine 402 is a binding site for ATP. Residues cysteine 413 and cysteine 417 are joined by a disulfide bond.

The protein belongs to the rhamnulokinase family. In terms of assembly, monomer. Mg(2+) serves as cofactor.

The catalysed reaction is L-rhamnulose + ATP = L-rhamnulose 1-phosphate + ADP + H(+). It participates in carbohydrate degradation; L-rhamnose degradation; glycerone phosphate from L-rhamnose: step 2/3. Involved in the catabolism of L-rhamnose (6-deoxy-L-mannose). Catalyzes the transfer of the gamma-phosphate group from ATP to the 1-hydroxyl group of L-rhamnulose to yield L-rhamnulose 1-phosphate. This Escherichia coli (strain SE11) protein is Rhamnulokinase.